The primary structure comprises 84 residues: Translational regulator CsrA (84 aa).

It belongs to the CsrA/RsmA family. As to quaternary structure, homodimer; the beta-strands of each monomer intercalate to form a hydrophobic core, while the alpha-helices form wings that extend away from the core.

Its subcellular location is the cytoplasm. A translational regulator that binds mRNA to regulate translation initiation and/or mRNA stability. Usually binds in the 5'-UTR at or near the Shine-Dalgarno sequence preventing ribosome-binding, thus repressing translation. Its main target seems to be the major flagellin gene, while its function is anatagonized by FliW. This Leptospira borgpetersenii serovar Hardjo-bovis (strain JB197) protein is Translational regulator CsrA.